Consider the following 678-residue polypeptide: Elongation factor G 2 (678 aa).

Residues 4-278 (QKLRNIGIIA…AVVDYLPSPQ (275 aa)) form the tr-type G domain. Residues 13-20 (AHVDAGKT), 77-81 (DTPGH), and 131-134 (NKMD) contribute to the GTP site.

The protein belongs to the TRAFAC class translation factor GTPase superfamily. Classic translation factor GTPase family. EF-G/EF-2 subfamily.

It is found in the cytoplasm. Its function is as follows. Catalyzes the GTP-dependent ribosomal translocation step during translation elongation. During this step, the ribosome changes from the pre-translocational (PRE) to the post-translocational (POST) state as the newly formed A-site-bound peptidyl-tRNA and P-site-bound deacylated tRNA move to the P and E sites, respectively. Catalyzes the coordinated movement of the two tRNA molecules, the mRNA and conformational changes in the ribosome. The sequence is that of Elongation factor G 2 from Hahella chejuensis (strain KCTC 2396).